Consider the following 268-residue polypeptide: Fibroblast growth factor 8 (268 aa).

Residues 1 to 22 (MGSPRSALSCLLLHLLVLCLQA) form the signal peptide. Position 23 is a pyrrolidone carboxylic acid (glutamine 23). Residues 29–87 (QKRGPGAGNPADTLGQGHEDRPFGQRSRAGKNFTNPAPNYPEEGSKEQRDSVLPKVTQR) are disordered. The N-linked (GlcNAc...) asparagine glycan is linked to asparagine 60. Positions 71–80 (EGSKEQRDSV) are enriched in basic and acidic residues. The N-linked (GlcNAc...) asparagine glycan is linked to asparagine 190.

Belongs to the heparin-binding growth factors family. As to quaternary structure, monomer. Homodimer. Interacts with FGFR1, FGFR2, FGFR3 and FGFR4. Affinity between fibroblast growth factors (FGFs) and their receptors is increased by heparan sulfate glycosaminoglycans that function as coreceptors. In terms of processing, the N-terminus is blocked. As to expression, absent in normal mammary glands and detected only in adult testis and ovary and in midgestational embryos.

The protein localises to the secreted. Plays an important role in the regulation of embryonic development, cell proliferation, cell differentiation and cell migration. Required for normal brain, eye, ear and limb development during embryogenesis. Required for normal development of the gonadotropin-releasing hormone (GnRH) neuronal system. Plays a role in neurite outgrowth in hippocampal cells. Cooperates with Wnt-1 in mouse mammary tumor virus-induced murine mammary tumorigenesis. The sequence is that of Fibroblast growth factor 8 (Fgf8) from Mus musculus (Mouse).